The chain runs to 595 residues: NADH-quinone oxidoreductase subunit C/D (595 aa).

Residues 1-186 are NADH dehydrogenase I subunit C; that stretch reads MAETDIAMPE…TPYMQDKAKQ (186 aa). Residues 210–595 form an NADH dehydrogenase I subunit D region; sequence DFMFLNLGPN…IDVVMADVDR (386 aa).

The protein in the N-terminal section; belongs to the complex I 30 kDa subunit family. This sequence in the C-terminal section; belongs to the complex I 49 kDa subunit family. As to quaternary structure, NDH-1 is composed of 13 different subunits. Subunits NuoB, CD, E, F, and G constitute the peripheral sector of the complex.

Its subcellular location is the cell inner membrane. The catalysed reaction is a quinone + NADH + 5 H(+)(in) = a quinol + NAD(+) + 4 H(+)(out). NDH-1 shuttles electrons from NADH, via FMN and iron-sulfur (Fe-S) centers, to quinones in the respiratory chain. The immediate electron acceptor for the enzyme in this species is believed to be ubiquinone. Couples the redox reaction to proton translocation (for every two electrons transferred, four hydrogen ions are translocated across the cytoplasmic membrane), and thus conserves the redox energy in a proton gradient. The polypeptide is NADH-quinone oxidoreductase subunit C/D (Acinetobacter baumannii (strain AYE)).